We begin with the raw amino-acid sequence, 1088 residues long: RNA-directed RNA polymerase (1088 aa).

In terms of domain architecture, RdRp catalytic spans 501–687 (LSYGDVTRFL…AKRYIAGGKI (187 aa)).

It belongs to the reoviridae RNA-directed RNA polymerase family. In terms of assembly, interacts with VP3 (Potential). Interacts with VP2; this interaction activates VP1. Interacts with NSP5; this interaction is probably necessary for the formation of functional virus factories. Interacts with NSP2; this interaction is weak. The cofactor is Mg(2+).

Its subcellular location is the virion. The catalysed reaction is RNA(n) + a ribonucleoside 5'-triphosphate = RNA(n+1) + diphosphate. RNA-directed RNA polymerase that is involved in both transcription and genome replication. Together with VP3 capping enzyme, forms an enzyme complex positioned near the channels situated at each of the five-fold vertices of the core. Following infection, the outermost layer of the virus is lost, leaving a double-layered particle (DLP) made up of the core and VP6 shell. VP1 then catalyzes the transcription of fully conservative plus-strand genomic RNAs that are extruded through the DLP's channels into the cytoplasm where they function as mRNAs for translation of viral proteins. One copy of each of the viral (+)RNAs is also recruited during core assembly, together with newly synthesized polymerase complexes and VP2. The polymerase of these novo-formed particles catalyzes the synthesis of complementary minus-strands leading to dsRNA formation. To do so, the polymerase specifically recognizes and binds 4 bases 5'-UGUG-3' in the conserved 3'-sequence of plus-strand RNA templates. VP2 presumably activates the autoinhibited VP1-RNA complex to coordinate packaging and genome replication. Once dsRNA synthesis is complete, the polymerase switches to the transcriptional mode, thus providing secondary transcription. The chain is RNA-directed RNA polymerase from Rotavirus A (strain RVA/Cow/United States/NCDV-Lincoln/1969/G6P6[1]) (RV-A).